The following is a 244-amino-acid chain: Phosphonates import ATP-binding protein PhnC 2 (244 aa).

The ABC transporter domain maps to 6–244 (IECHNLETAY…LQAQFVVNNQ (239 aa)). Residue 41 to 48 (GLNGAGKS) participates in ATP binding.

Belongs to the ABC transporter superfamily. Phosphonates importer (TC 3.A.1.9.1) family. In terms of assembly, the complex is composed of two ATP-binding proteins (PhnC), two transmembrane proteins (PhnE) and a solute-binding protein (PhnD).

The protein resides in the cell inner membrane. The catalysed reaction is phosphonate(out) + ATP + H2O = phosphonate(in) + ADP + phosphate + H(+). Its function is as follows. Part of the ABC transporter complex PhnCDE involved in phosphonates import. Responsible for energy coupling to the transport system. In Nostoc sp. (strain PCC 7120 / SAG 25.82 / UTEX 2576), this protein is Phosphonates import ATP-binding protein PhnC 2.